We begin with the raw amino-acid sequence, 429 residues long: Tryptophan synthase beta chain 2 (429 aa).

Residue lysine 111 is modified to N6-(pyridoxal phosphate)lysine.

It belongs to the TrpB family. In terms of assembly, tetramer of two alpha and two beta chains. The cofactor is pyridoxal 5'-phosphate.

The enzyme catalyses (1S,2R)-1-C-(indol-3-yl)glycerol 3-phosphate + L-serine = D-glyceraldehyde 3-phosphate + L-tryptophan + H2O. Its pathway is amino-acid biosynthesis; L-tryptophan biosynthesis; L-tryptophan from chorismate: step 5/5. Its function is as follows. The beta subunit is responsible for the synthesis of L-tryptophan from indole and L-serine. The sequence is that of Tryptophan synthase beta chain 2 (trpB2) from Saccharolobus solfataricus (strain ATCC 35092 / DSM 1617 / JCM 11322 / P2) (Sulfolobus solfataricus).